Here is a 567-residue protein sequence, read N- to C-terminus: Dihydroxy-acid dehydratase 2 (567 aa).

Cys56 is a [2Fe-2S] cluster binding site. Asp88 contributes to the Mg(2+) binding site. [2Fe-2S] cluster is bound at residue Cys129. The Mg(2+) site is built by Asp130 and Lys131. Lys131 carries the post-translational modification N6-carboxylysine. Cys206 is a binding site for [2Fe-2S] cluster. A Mg(2+)-binding site is contributed by Glu457. Ser483 acts as the Proton acceptor in catalysis.

This sequence belongs to the IlvD/Edd family. Homodimer. It depends on [2Fe-2S] cluster as a cofactor. Mg(2+) serves as cofactor.

The enzyme catalyses (2R)-2,3-dihydroxy-3-methylbutanoate = 3-methyl-2-oxobutanoate + H2O. The catalysed reaction is (2R,3R)-2,3-dihydroxy-3-methylpentanoate = (S)-3-methyl-2-oxopentanoate + H2O. Its pathway is amino-acid biosynthesis; L-isoleucine biosynthesis; L-isoleucine from 2-oxobutanoate: step 3/4. It functions in the pathway amino-acid biosynthesis; L-valine biosynthesis; L-valine from pyruvate: step 3/4. Functionally, functions in the biosynthesis of branched-chain amino acids. Catalyzes the dehydration of (2R,3R)-2,3-dihydroxy-3-methylpentanoate (2,3-dihydroxy-3-methylvalerate) into 2-oxo-3-methylpentanoate (2-oxo-3-methylvalerate) and of (2R)-2,3-dihydroxy-3-methylbutanoate (2,3-dihydroxyisovalerate) into 2-oxo-3-methylbutanoate (2-oxoisovalerate), the penultimate precursor to L-isoleucine and L-valine, respectively. This chain is Dihydroxy-acid dehydratase 2, found in Corynebacterium efficiens (strain DSM 44549 / YS-314 / AJ 12310 / JCM 11189 / NBRC 100395).